The following is a 215-amino-acid chain: Large ribosomal subunit protein uL3 (215 aa).

A disordered region spans residues 124–164; it reads KRHGFSRGPMTHGSKNHREPGSTGAGTTPGRIYPGKRMAGR.

This sequence belongs to the universal ribosomal protein uL3 family. Part of the 50S ribosomal subunit. Forms a cluster with proteins L14 and L19.

In terms of biological role, one of the primary rRNA binding proteins, it binds directly near the 3'-end of the 23S rRNA, where it nucleates assembly of the 50S subunit. The polypeptide is Large ribosomal subunit protein uL3 (Synechococcus sp. (strain RCC307)).